The primary structure comprises 247 residues: Synaptonemal complex central element protein 1-like (247 aa).

Residues 71–196 (SEELGEAQAL…LQEARETWDS (126 aa)) are a coiled coil. A disordered region spans residues 189–247 (EARETWDSPGNCGLKTELEELEGQSQRSPEAQNDKGEASQEEQHHLETSEELPRTGTLC). Positions 220–241 (QNDKGEASQEEQHHLETSEELP) are enriched in basic and acidic residues.

It belongs to the SYCE family. Isoform 1 is abundantly expressed in testis and weakly in ovary, it is not found in other tissues. Isoform 2 is expressed in testis and poorly in brain, heart, lung and other examined tissues.

Functionally, may be involved in meiosis. Isoform 1 may be involved in meiosis during spermatogenesis while isoform 2 is probably related to a later stage of meiosis, in the development stage of secondary spermatocytes and spermatids. The polypeptide is Synaptonemal complex central element protein 1-like (Syce1l) (Mus musculus (Mouse)).